Consider the following 313-residue polypeptide: Olfactory receptor 56A4 (313 aa).

At 1–28 the chain is on the extracellular side; sequence MASPSNDSTAPVSEFLLICFPNFQSWQH. Asn6 carries N-linked (GlcNAc...) asparagine glycosylation. A helical membrane pass occupies residues 29 to 49; that stretch reads WLSLPLSLLFLLAMGANTTLL. Residues 50 to 57 lie on the Cytoplasmic side of the membrane; it reads ITIQLEAS. Residues 58-78 form a helical membrane-spanning segment; the sequence is LHQPLYYLLSLLSLLDIVLCL. The Extracellular segment spans residues 79–102; it reads TVIPKVLAIFWFDLRSISFPACFL. A disulfide bond links Cys100 and Cys192. A helical membrane pass occupies residues 103–123; that stretch reads QMFIMNSFLTMESCTFMVMAY. Residues 124-142 are Cytoplasmic-facing; the sequence is DRYVAICHPLRYPSIITDQ. The chain crosses the membrane as a helical span at residues 143–163; that stretch reads FVARAVVFVIARNAFVSLPVP. At 164 to 199 the chain is on the extracellular side; it reads MLSARLRYCAGNIIKNCICSNLSVSKLSCDDITFNQ. Asn184 carries an N-linked (GlcNAc...) asparagine glycan. The helical transmembrane segment at 200–220 threads the bilayer; the sequence is LYQFVAGWTLLGSDLILIVIS. Topologically, residues 221–240 are cytoplasmic; that stretch reads YSFILKVVLRIKAEGAVAKA. Residues 241-261 form a helical membrane-spanning segment; sequence LSTCGSHFILILFFSTVLLVL. Residues 262 to 276 lie on the Extracellular side of the membrane; it reads VITNLARKRIPPDVP. A helical membrane pass occupies residues 277 to 297; sequence ILLNILHHLIPPALNPIVYGV. Over 298–313 the chain is Cytoplasmic; the sequence is RTKEIKQGIQNLLKRL.

It belongs to the G-protein coupled receptor 1 family.

The protein resides in the cell membrane. In terms of biological role, odorant receptor. The chain is Olfactory receptor 56A4 (OR56A4) from Homo sapiens (Human).